The following is a 472-amino-acid chain: Transcriptional activator protein rec16 (472 aa).

The segment at 420 to 444 (FICCYCTKPFLSISKLQEHESSCSH) adopts a C2H2-type zinc-finger fold.

The protein localises to the nucleus. Its function is as follows. Transcriptional activator that controls the onset of premeiotic DNA synthesis by regulating res2 and some other factor(s) in a mei2 independent cascade. This is Transcriptional activator protein rec16 (rec16) from Schizosaccharomyces pombe (strain 972 / ATCC 24843) (Fission yeast).